The chain runs to 181 residues: Probable pyruvoyl-dependent arginine decarboxylase (181 aa).

Ser43 is subject to Pyruvic acid (Ser).

The protein belongs to the PdaD family. The cofactor is pyruvate.

It catalyses the reaction L-arginine + H(+) = agmatine + CO2. This is Probable pyruvoyl-dependent arginine decarboxylase from Chlorobium luteolum (strain DSM 273 / BCRC 81028 / 2530) (Pelodictyon luteolum).